The sequence spans 102 residues: Small ribosomal subunit protein uS10 (102 aa).

The protein belongs to the universal ribosomal protein uS10 family. Part of the 30S ribosomal subunit.

Functionally, involved in the binding of tRNA to the ribosomes. This Thermotoga maritima (strain ATCC 43589 / DSM 3109 / JCM 10099 / NBRC 100826 / MSB8) protein is Small ribosomal subunit protein uS10.